The sequence spans 142 residues: Large ribosomal subunit protein uL11 (142 aa).

Belongs to the universal ribosomal protein uL11 family. In terms of assembly, part of the ribosomal stalk of the 50S ribosomal subunit. Interacts with L10 and the large rRNA to form the base of the stalk. L10 forms an elongated spine to which L12 dimers bind in a sequential fashion forming a multimeric L10(L12)X complex. One or more lysine residues are methylated.

Forms part of the ribosomal stalk which helps the ribosome interact with GTP-bound translation factors. The protein is Large ribosomal subunit protein uL11 of Shewanella amazonensis (strain ATCC BAA-1098 / SB2B).